Here is a 575-residue protein sequence, read N- to C-terminus: Sorting nexin-41 (575 aa).

The segment at 30-66 (TDGPDDYDFTEPSINGSSDENAQSNAVAEPIEETDEP) is disordered. The segment covering 41–55 (PSINGSSDENAQSNA) has biased composition (polar residues). In terms of domain architecture, PX spans 101–221 (QGKNPEVIRI…QKFLNPEYFW (121 aa)). A 1,2-diacyl-sn-glycero-3-phospho-(1D-myo-inositol-3-phosphate) is bound by residues Arg139, Ser141, Lys165, and Arg188. Residues 467 to 486 (FRSSASPNNKSGSDSISSEV) are disordered. Positions 469–484 (SSASPNNKSGSDSISS) are enriched in polar residues.

Belongs to the sorting nexin family.

The protein resides in the endosome membrane. Its subcellular location is the endomembrane system. May be required for cytoplasm to vacuole transport (Cvt) and pexophagy. This is Sorting nexin-41 (SNX41) from Kluyveromyces lactis (strain ATCC 8585 / CBS 2359 / DSM 70799 / NBRC 1267 / NRRL Y-1140 / WM37) (Yeast).